Here is a 158-residue protein sequence, read N- to C-terminus: SsrA-binding protein (158 aa).

A disordered region spans residues 134-158 (KLHDKRETEKERDWNRQKSRLLKTG). The span at 137–149 (DKRETEKERDWNR) shows a compositional bias: basic and acidic residues.

The protein belongs to the SmpB family.

Its subcellular location is the cytoplasm. Required for rescue of stalled ribosomes mediated by trans-translation. Binds to transfer-messenger RNA (tmRNA), required for stable association of tmRNA with ribosomes. tmRNA and SmpB together mimic tRNA shape, replacing the anticodon stem-loop with SmpB. tmRNA is encoded by the ssrA gene; the 2 termini fold to resemble tRNA(Ala) and it encodes a 'tag peptide', a short internal open reading frame. During trans-translation Ala-aminoacylated tmRNA acts like a tRNA, entering the A-site of stalled ribosomes, displacing the stalled mRNA. The ribosome then switches to translate the ORF on the tmRNA; the nascent peptide is terminated with the 'tag peptide' encoded by the tmRNA and targeted for degradation. The ribosome is freed to recommence translation, which seems to be the essential function of trans-translation. The protein is SsrA-binding protein of Allorhizobium ampelinum (strain ATCC BAA-846 / DSM 112012 / S4) (Agrobacterium vitis (strain S4)).